Here is a 114-residue protein sequence, read N- to C-terminus: UPF0212 protein UNCMA_00570 (114 aa).

It belongs to the UPF0212 family.

This chain is UPF0212 protein UNCMA_00570, found in Methanocella arvoryzae (strain DSM 22066 / NBRC 105507 / MRE50).